Reading from the N-terminus, the 692-residue chain is Potassium-transporting ATPase ATP-binding subunit (692 aa).

Transmembrane regions (helical) follow at residues 35–55 (VMFIVFLGALFTTWIFFKDLY), 64–84 (LQISLWLWFTVLFANFAEAIA), 213–233 (IALTMLLSGLSFIFLIAVMSL), and 254–274 (ILISLLVCLIPTTIAGLLSAI). Aspartate 307 acts as the 4-aspartylphosphate intermediate in catalysis. ATP contacts are provided by residues aspartate 344, glutamate 348, 377–384 (FSASTKMS), and lysine 400. Positions 523 and 527 each coordinate Mg(2+). 3 helical membrane passes run 592 to 612 (YFAILPALFGSFYAVSEVGPL), 626 to 646 (AVLSAVIFNALVIPALIPLAL), and 672 to 692 (MVIPFLGIKCIDLMLGFLGII).

Belongs to the cation transport ATPase (P-type) (TC 3.A.3) family. Type IA subfamily. The system is composed of three essential subunits: KdpA, KdpB and KdpC.

It is found in the cell inner membrane. The catalysed reaction is K(+)(out) + ATP + H2O = K(+)(in) + ADP + phosphate + H(+). Part of the high-affinity ATP-driven potassium transport (or Kdp) system, which catalyzes the hydrolysis of ATP coupled with the electrogenic transport of potassium into the cytoplasm. This subunit is responsible for energy coupling to the transport system and for the release of the potassium ions to the cytoplasm. The protein is Potassium-transporting ATPase ATP-binding subunit of Leptospira interrogans serogroup Icterohaemorrhagiae serovar Lai (strain 56601).